The primary structure comprises 145 residues: 3-hydroxyacyl-[acyl-carrier-protein] dehydratase FabZ (145 aa).

The active site involves histidine 48.

Belongs to the thioester dehydratase family. FabZ subfamily.

The protein localises to the cytoplasm. It carries out the reaction a (3R)-hydroxyacyl-[ACP] = a (2E)-enoyl-[ACP] + H2O. Functionally, involved in unsaturated fatty acids biosynthesis. Catalyzes the dehydration of short chain beta-hydroxyacyl-ACPs and long chain saturated and unsaturated beta-hydroxyacyl-ACPs. This Geobacillus sp. (strain WCH70) protein is 3-hydroxyacyl-[acyl-carrier-protein] dehydratase FabZ.